Reading from the N-terminus, the 269-residue chain is Fructose permease IIC component (269 aa).

A PTS EIIC type-4 domain is found at M1 to L234. 7 consecutive transmembrane segments (helical) span residues S2 to L22, T35 to L54, V64 to A86, I90 to F110, V149 to G169, I181 to P201, and F206 to A226.

It localises to the cell membrane. In terms of biological role, the phosphoenolpyruvate-dependent sugar phosphotransferase system (PTS), a major carbohydrate active -transport system, catalyzes the phosphorylation of incoming sugar substrates concomitant with their translocation across the cell membrane. This system is involved in fructose transport. The protein is Fructose permease IIC component (levF) of Bacillus subtilis (strain 168).